Reading from the N-terminus, the 316-residue chain is Transaldolase (316 aa).

Lys-132 functions as the Schiff-base intermediate with substrate in the catalytic mechanism.

The protein belongs to the transaldolase family. Type 1 subfamily. Homodimer.

The protein resides in the cytoplasm. It catalyses the reaction D-sedoheptulose 7-phosphate + D-glyceraldehyde 3-phosphate = D-erythrose 4-phosphate + beta-D-fructose 6-phosphate. The protein operates within carbohydrate degradation; pentose phosphate pathway; D-glyceraldehyde 3-phosphate and beta-D-fructose 6-phosphate from D-ribose 5-phosphate and D-xylulose 5-phosphate (non-oxidative stage): step 2/3. Its function is as follows. Transaldolase is important for the balance of metabolites in the pentose-phosphate pathway. The protein is Transaldolase of Vibrio vulnificus (strain CMCP6).